The primary structure comprises 255 residues: 4-diphosphocytidyl-2-C-methyl-D-erythritol kinase (255 aa).

Residue Lys6 is part of the active site. Position 95-105 (95-105) interacts with ATP; the sequence is PVCAGLGGGSS. Asp137 is an active-site residue.

The protein belongs to the GHMP kinase family. IspE subfamily.

It catalyses the reaction 4-CDP-2-C-methyl-D-erythritol + ATP = 4-CDP-2-C-methyl-D-erythritol 2-phosphate + ADP + H(+). It functions in the pathway isoprenoid biosynthesis; isopentenyl diphosphate biosynthesis via DXP pathway; isopentenyl diphosphate from 1-deoxy-D-xylulose 5-phosphate: step 3/6. Catalyzes the phosphorylation of the position 2 hydroxy group of 4-diphosphocytidyl-2C-methyl-D-erythritol. The sequence is that of 4-diphosphocytidyl-2-C-methyl-D-erythritol kinase from Campylobacter jejuni subsp. doylei (strain ATCC BAA-1458 / RM4099 / 269.97).